A 392-amino-acid polypeptide reads, in one-letter code: tRNA (guanine-N(7)-)-methyltransferase (392 aa).

S-adenosyl-L-methionine-binding residues include Glu-123, Glu-148, and Asp-175. Residues Lys-201 and Asp-231 each coordinate substrate.

It belongs to the class I-like SAM-binding methyltransferase superfamily. TrmB family.

The enzyme catalyses guanosine(46) in tRNA + S-adenosyl-L-methionine = N(7)-methylguanosine(46) in tRNA + S-adenosyl-L-homocysteine. Its pathway is tRNA modification; N(7)-methylguanine-tRNA biosynthesis. Catalyzes the formation of N(7)-methylguanine at position 46 (m7G46) in tRNA. This chain is tRNA (guanine-N(7)-)-methyltransferase, found in Campylobacter jejuni subsp. jejuni serotype O:6 (strain 81116 / NCTC 11828).